Reading from the N-terminus, the 120-residue chain is Large ribosomal subunit protein uL18 (120 aa).

It belongs to the universal ribosomal protein uL18 family. In terms of assembly, part of the 50S ribosomal subunit; part of the 5S rRNA/L5/L18/L25 subcomplex. Contacts the 5S and 23S rRNAs.

In terms of biological role, this is one of the proteins that bind and probably mediate the attachment of the 5S RNA into the large ribosomal subunit, where it forms part of the central protuberance. The chain is Large ribosomal subunit protein uL18 from Acidiphilium cryptum (strain JF-5).